Here is a 144-residue protein sequence, read N- to C-terminus: MKSVLIFLVAIALFSANIVSADEQTTRGRHTEPDDHHEKPTTQCTHEETTSTQHHHEEVVTTQTPHHEEKTTTEETHHSDDLIVHEGGKTYHVVCHEEGPIHIQEMCNKYIICSKSGSLWYITVMPCSIGTKFDPISRNCVLDN.

The signal sequence occupies residues Met1–Ser20. The segment at Gln24–His77 is disordered. The region spanning His92–Asn144 is the Chitin-binding type-2 domain. A disulfide bridge connects residues Cys127 and Cys140.

This Blomia tropicalis (Mite) protein is Major allergen Blo t 12.